The primary structure comprises 353 residues: Melanin-concentrating hormone receptor 1 (353 aa).

Positions 1-26 are disordered; the sequence is MDLQTSLLSTGPNASNISDGQDNLTL. The Extracellular portion of the chain corresponds to 1-45; sequence MDLQTSLLSTGPNASNISDGQDNLTLPGSPPRTGSVSYINIIMPS. 3 N-linked (GlcNAc...) asparagine glycosylation sites follow: N13, N16, and N23. Residues 46–66 traverse the membrane as a helical segment; that stretch reads VFGTICLLGIVGNSTVIFAVV. The Cytoplasmic segment spans residues 67–79; it reads KKSKLHWCSNVPD. A helical membrane pass occupies residues 80–100; it reads IFIINLSVVDLLFLLGMPFMI. Over 101–116 the chain is Extracellular; the sequence is HQLMGNGVWHFGETMC. Cysteines 116 and 194 form a disulfide. Residues 117–139 traverse the membrane as a helical segment; it reads TLITAMDANSQFTSTYILTAMTI. Topologically, residues 140–161 are cytoplasmic; sequence DRYLATVHPISSTKFRKPSMAT. The helical transmembrane segment at 162-182 threads the bilayer; the sequence is LVICLLWALSFISITPVWLYA. At 183 to 204 the chain is on the extracellular side; sequence RLIPFPGGAVGCGIRLPNPDTD. A helical membrane pass occupies residues 205-225; sequence LYWFTLYQFFLAFALPFVVIT. The Cytoplasmic segment spans residues 226-256; it reads AAYVKILQRMTSSVAPASQRSIRLRTKRVTR. A helical membrane pass occupies residues 257-277; it reads TAIAICLVFFVCWAPYYVLQL. The Extracellular portion of the chain corresponds to 278-294; the sequence is TQLSISRPTLTFVYLYN. Residues 295–315 form a helical membrane-spanning segment; the sequence is AAISLGYANSCLNPFVYIVLC. At 316–353 the chain is on the cytoplasmic side; it reads ETFRKRLVLSVKPAAQGQLRTVSNAQTADEERTESKGT.

Belongs to the G-protein coupled receptor 1 family. As to quaternary structure, interacts with NCDN. In terms of tissue distribution, high level in the brain, moderate amounts in the eye and skeletal muscle, and small amounts in tongue and pituitary.

The protein resides in the cell membrane. Receptor for melanin-concentrating hormone, coupled to G proteins that inhibit adenylyl cyclase. The chain is Melanin-concentrating hormone receptor 1 from Rattus norvegicus (Rat).